The following is a 302-amino-acid chain: Probable alpha-L-glutamate ligase (302 aa).

In terms of domain architecture, ATP-grasp spans 104–287 (MQLLSRKGIG…IAGMVFEFLE (184 aa)). Residues K141, 178-179 (EF), D187, and 211-213 (RSN) each bind ATP. Mg(2+)-binding residues include D248, E260, and N262. Mn(2+) is bound by residues D248, E260, and N262.

Belongs to the RimK family. The cofactor is Mg(2+). Mn(2+) is required as a cofactor.

This chain is Probable alpha-L-glutamate ligase, found in Psychromonas ingrahamii (strain DSM 17664 / CCUG 51855 / 37).